A 189-amino-acid chain; its full sequence is Glycerol-3-phosphate acyltransferase (189 aa).

Transmembrane regions (helical) follow at residues 1–21, 51–71, 77–97, 111–131, and 151–171; these read MFWL…AILL, LAVL…LIAH, LQQQ…PLYF, MLLG…ALTF, and LLAW…LLIV.

The protein belongs to the PlsY family. As to quaternary structure, probably interacts with PlsX.

The protein localises to the cell inner membrane. The enzyme catalyses an acyl phosphate + sn-glycerol 3-phosphate = a 1-acyl-sn-glycero-3-phosphate + phosphate. It functions in the pathway lipid metabolism; phospholipid metabolism. Functionally, catalyzes the transfer of an acyl group from acyl-phosphate (acyl-PO(4)) to glycerol-3-phosphate (G3P) to form lysophosphatidic acid (LPA). This enzyme utilizes acyl-phosphate as fatty acyl donor, but not acyl-CoA or acyl-ACP. The protein is Glycerol-3-phosphate acyltransferase of Pseudomonas fluorescens (strain ATCC BAA-477 / NRRL B-23932 / Pf-5).